A 266-amino-acid polypeptide reads, in one-letter code: 15-hydroxyprostaglandin dehydrogenase [NAD(+)] (266 aa).

NAD(+) is bound by residues Gly-12–Ala-20, Asp-36–Trp-37, Cys-63–Val-65, and Asn-91. Ser-138 and Gln-148 together coordinate substrate. Tyr-151 acts as the Proton acceptor in catalysis. Residues Tyr-151–Lys-155 and Val-186–Thr-188 contribute to the NAD(+) site.

The protein belongs to the short-chain dehydrogenases/reductases (SDR) family. Homodimer.

The protein resides in the cytoplasm. It catalyses the reaction prostaglandin E2 + NAD(+) = 15-oxoprostaglandin E2 + NADH + H(+). It carries out the reaction (15S)-hydroxy-(5Z,8Z,11Z,13E)-eicosatetraenoate + NAD(+) = 15-oxo-(5Z,8Z,11Z,13E)-eicosatetraenoate + NADH + H(+). The catalysed reaction is (11R)-hydroxy-(5Z,8Z,12E,14Z)-eicosatetraenoate + NAD(+) = 11-oxo-(5Z,8Z,12E,14Z)-eicosatetraenoate + NADH + H(+). The enzyme catalyses lipoxin A4 + NAD(+) = 15-oxo-(5S,6R)-dihydroxy-(7E,9E,11Z,13E)-eicosatetraenoate + NADH + H(+). It catalyses the reaction 15-oxo-(5S,6R)-dihydroxy-(7E,9E,11Z)-eicosatrienoate + NADH + H(+) = (5S,6R,15S)-trihydroxy-(7E,9E,11Z)-eicosatrienoate + NAD(+). It carries out the reaction prostaglandin A1 + NAD(+) = 15-oxo-prostaglandin A1 + NADH + H(+). The catalysed reaction is prostaglandin E1 + NAD(+) = 15-oxoprostaglandin E1 + NADH + H(+). The enzyme catalyses 14-hydroxy-(4Z,7Z,10Z,12E,16Z,19Z)-docosahexaenoate + NAD(+) = 14-oxo-(4Z,7Z,10Z,12E,16Z,19Z)-docosahexaenoate + NADH + H(+). It catalyses the reaction resolvin E1 + NAD(+) = 18-oxo-resolvin E1 + NADH + H(+). It carries out the reaction resolvin D1 + NAD(+) = 8-oxoresolvin D1 + NADH + H(+). The catalysed reaction is resolvin D1 + NAD(+) = 17-oxoresolvin D1 + NADH + H(+). The enzyme catalyses resolvin D2 + NAD(+) = 7-oxoresolvin D2 + NADH + H(+). It catalyses the reaction resolvin D2 + NAD(+) = 16-oxoresolvin D2 + NADH + H(+). Functionally, catalyzes the NAD-dependent dehydrogenation (oxidation) of a broad array of hydroxylated polyunsaturated fatty acids (mainly eicosanoids and docosanoids, including prostaglandins, lipoxins and resolvins), yielding their corresponding keto (oxo) metabolites. Decreases the levels of the pro-proliferative prostaglandins such as prostaglandin E2 (whose activity is increased in cancer because of an increase in the expression of cyclooxygenase 2) and generates oxo-fatty acid products that can profoundly influence cell function by abrogating pro-inflammatory cytokine expression. Converts resolvins E1, D1 and D2 to their oxo products, which represents a mode of resolvin inactivation. Resolvin E1 plays important roles during the resolution phase of acute inflammation, while resolvins D1 and D2 have a unique role in obesity-induced adipose inflammation. The chain is 15-hydroxyprostaglandin dehydrogenase [NAD(+)] (HPGD) from Bos taurus (Bovine).